The chain runs to 1059 residues: Kinesin-like protein KIN-7K, chloroplastic (1059 aa).

2 stretches are compositionally biased toward low complexity: residues 1–35 (MSSR…SAGS) and 43–58 (PRSY…SSHF). The transit peptide at 1–48 (MSSRPSSSASSRRSSSPFSAGSRRPPTSSSSSAGSYLTGRLMPRSYST) directs the protein to the chloroplast. A disordered region spans residues 1 to 99 (MSSRPSSSAS…SPPSPVPFPS (99 aa)). Gly residues predominate over residues 59–69 (FGGGGGSGGGS). Residues 70–87 (RSTTPGRRGSSSSSLVGP) show a composition bias toward low complexity. The segment covering 88-97 (VPSPPSPVPF) has biased composition (pro residues). The region spanning 114–431 (SISVTIRFRP…LKFASRAKRV (318 aa)) is the Kinesin motor domain. 194–201 (GVTSSGKT) contributes to the ATP binding site. A coiled-coil region spans residues 435-518 (AARNRMIDEK…IQRLTKLILV (84 aa)). Residues 526–570 (ALTDTSSHQRHNSVNEEDKVSTSQDSSMLVQNDSATKDSLSSASP) are disordered. A compositionally biased stretch (polar residues) spans 546–569 (STSQDSSMLVQNDSATKDSLSSAS). Coiled coils occupy residues 640–674 (EGTK…GEAS), 700–781 (ELEL…EENR), and 862–910 (LEDM…LEND). The segment at 1013 to 1048 (CKVCFESATAAVLLPCRHFCLCKPCSLACSECPLCR) adopts an RING-type zinc-finger fold.

The protein belongs to the TRAFAC class myosin-kinesin ATPase superfamily. Kinesin family. KIN-7 subfamily.

It is found in the plastid. Its subcellular location is the chloroplast. In Oryza sativa subsp. japonica (Rice), this protein is Kinesin-like protein KIN-7K, chloroplastic.